Consider the following 1526-residue polypeptide: DNA topoisomerase 2-alpha (1526 aa).

Residue Met-1 is modified to N-acetylmethionine. Ser-4 bears the Phosphoserine mark. Lys-17 participates in a covalent cross-link: Glycyl lysine isopeptide (Lys-Gly) (interchain with G-Cter in SUMO2). ATP contacts are provided by residues Asn-90, Asn-118, and 146 to 148 (SSN). Residues Lys-154 and Lys-155 each participate in a glycyl lysine isopeptide (Lys-Gly) (interchain with G-Cter in SUMO2) cross-link. 159 to 166 (GRNGYGAK) provides a ligand contact to ATP. Thr-280 is modified (phosphothreonine). Residues 340–342 (KKK) form an interaction with DNA region. A Glycyl lysine isopeptide (Lys-Gly) (interchain with G-Cter in SUMO2) cross-link involves residue Lys-350. 374–376 (QTK) contributes to the ATP binding site. Residues Lys-384, Lys-395, Lys-414, Lys-416, Lys-423, and Lys-438 each participate in a glycyl lysine isopeptide (Lys-Gly) (interchain with G-Cter in SUMO2) cross-link. A Toprim domain is found at 453-570 (CTLILTEGDS…SLLRHRFLEE (118 aa)). Position 459 (Glu-459) interacts with Mg(2+). Glycyl lysine isopeptide (Lys-Gly) (interchain with G-Cter in SUMO2) cross-links involve residues Lys-464, Lys-478, and Lys-527. Mg(2+) contacts are provided by Asp-539 and Asp-541. Residues Lys-582, Lys-597, Lys-612, Lys-620, Lys-623, Lys-630, Lys-637, Lys-653, Lys-660, and Lys-674 each participate in a glycyl lysine isopeptide (Lys-Gly) (interchain with G-Cter in SUMO2) cross-link. The Topo IIA-type catalytic domain occupies 713-1168 (IPSMVDGLKP…TPSDLWKEDL (456 aa)). Tyr-803 serves as the catalytic O-(5'-phospho-DNA)-tyrosine intermediate. The interval 988–997 (KLQTSLTCNS) is interaction with DNA. Lys-1073 is covalently cross-linked (Glycyl lysine isopeptide (Lys-Gly) (interchain with G-Cter in SUMO2)). The segment covering 1087 to 1096 (AWKEAQQKVP) has biased composition (basic and acidic residues). The segment at 1087–1120 (AWKEAQQKVPEEEENEENEESESESTSPAAESGP) is disordered. The span at 1097–1109 (EEEENEENEESES) shows a compositional bias: acidic residues. Glycyl lysine isopeptide (Lys-Gly) (interchain with G-Cter in SUMO2) cross-links involve residues Lys-1193 and Lys-1201. Ser-1210 carries the phosphoserine modification. Residues 1229–1526 (EKKIRRKIKS…YLEESDDDLF (298 aa)) are disordered. Lys-1237 is covalently cross-linked (Glycyl lysine isopeptide (Lys-Gly) (interchain with G-Cter in SUMO1); alternate). Lys-1237 participates in a covalent cross-link: Glycyl lysine isopeptide (Lys-Gly) (interchain with G-Cter in SUMO2); alternate. A Phosphothreonine modification is found at Thr-1244. Residues 1254 to 1268 (LRQRLEKRQKREPGT) show a composition bias toward basic and acidic residues. Glycyl lysine isopeptide (Lys-Gly) (interchain with G-Cter in SUMO2) cross-links involve residues Lys-1272, Lys-1279, and Lys-1282. Phosphoserine occurs at positions 1291, 1293, 1295, and 1298. Thr-1323 carries the post-translational modification Phosphothreonine. The span at 1326-1346 (LDSDDDFSGLDEKDEDEDFFP) shows a compositional bias: acidic residues. Residues Ser-1328 and Ser-1333 each carry the phosphoserine modification. Residue Thr-1350 is modified to Phosphothreonine. Residues Lys-1359, Lys-1363, and Lys-1369 each participate in a glycyl lysine isopeptide (Lys-Gly) (interchain with G-Cter in SUMO2) cross-link. Ser-1370 and Ser-1373 each carry phosphoserine. A Glycyl lysine isopeptide (Lys-Gly) (interchain with G-Cter in SUMO2) cross-link involves residue Lys-1381. 2 positions are modified to phosphoserine: Ser-1383 and Ser-1387. Over residues 1417–1427 (TKGQSLTSTAG) the composition is skewed to polar residues. Lys-1418 is covalently cross-linked (Glycyl lysine isopeptide (Lys-Gly) (interchain with G-Cter in SUMO2); alternate). Lys-1418 carries the N6-acetyllysine; alternate modification. The interaction with PLSCR1 stretch occupies residues 1429 to 1435 (KKRAVPK). Lys-1438 is covalently cross-linked (Glycyl lysine isopeptide (Lys-Gly) (interchain with G-Cter in SUMO2); alternate). Lys-1438 carries the post-translational modification N6-acetyllysine; alternate. Glycyl lysine isopeptide (Lys-Gly) (interchain with G-Cter in SUMO2) cross-links involve residues Lys-1450 and Lys-1455. 4 positions are modified to phosphoserine: Ser-1465, Ser-1467, Ser-1470, and Ser-1472. Residues Lys-1480 and Lys-1488 each participate in a glycyl lysine isopeptide (Lys-Gly) (interchain with G-Cter in SUMO2) cross-link. A compositionally biased stretch (basic and acidic residues) spans 1487–1498 (LKGEERDFHVDL). Position 1521 is a phosphoserine (Ser-1521).

It belongs to the type II topoisomerase family. In terms of assembly, homodimer. Interacts with COPS5. Interacts with RECQL5; this stimulates DNA decatenation. Interacts with SETMAR; stimulates the topoisomerase activity. Interacts with DHX9; this interaction occurs in a E2 enzyme UBE2I- and RNA-dependent manner, negatively regulates DHX9-mediated double-stranded DNA and RNA duplex helicase activity and stimulates TOP2A-mediated supercoiled DNA relaxation activity. Interacts with HNRNPU (via C-terminus); this interaction protects the topoisomerase TOP2A from degradation and positively regulates the relaxation of supercoiled DNA in a RNA-dependent manner. Interacts with MCM3AP. Interacts with ERCC6. Interacts with PLSCR1. Interacts with GCNA; this interaction allows the resolution of topoisomerase II (TOP2A) DNA-protein cross-links. Interacts with POL1RA/RPA1 (via dock II) and UBTF in the context of Pol I complex; may assist Pol I transcription initiation by releasing supercoils occurring during DNA unwinding. Interacts with TPRN; TPRN interacts with a number of DNA damage response proteins, is recruited to sites of DNA damage and may play a role in DNA damage repair. The cofactor is Mg(2+). It depends on Mn(2+) as a cofactor. Requires Ca(2+) as cofactor. In terms of processing, phosphorylation has no effect on catalytic activity.

It localises to the cytoplasm. It is found in the nucleus. The protein resides in the nucleoplasm. The protein localises to the nucleolus. It catalyses the reaction ATP-dependent breakage, passage and rejoining of double-stranded DNA.. Key decatenating enzyme that alters DNA topology by binding to two double-stranded DNA molecules, generating a double-stranded break in one of the strands, passing the intact strand through the broken strand, and religating the broken strand. May play a role in regulating the period length of BMAL1 transcriptional oscillation. This chain is DNA topoisomerase 2-alpha (Top2a), found in Rattus norvegicus (Rat).